Consider the following 620-residue polypeptide: Carotenoid isomerooxygenase (620 aa).

Fe cation contacts are provided by histidine 211, histidine 267, and histidine 337. A disordered region spans residues 440–459 (NGKQATAGEESPKRDAKRGR). Basic and acidic residues predominate over residues 449–459 (ESPKRDAKRGR). Histidine 612 serves as a coordination point for Fe cation.

The protein belongs to the carotenoid oxygenase family. It depends on Fe(2+) as a cofactor. In terms of tissue distribution, expression follows organogenesis of the larval Bolwig's organ (BO), which mediates larval photophobic behavior. In the adult, expression is restricted exclusively to the brain. Expressed in both neuronal cells and glia cells. Not active within photoreceptors. Active within neuronal cells within the central nervous system.

It carries out the reaction all-trans-zeaxanthin + O2 = (3R)-11-cis-3-hydroxyretinal + (3R)-all-trans-3-hydroxyretinal. It participates in cofactor metabolism; retinol metabolism. Catalyzes the oxidative cleavage at the 15,15'-double bond of carotenoids and the simultaneous all-trans to 11-cis isomerization of one cleavage product. Carotenoids like 11-cis retinal can promote visual pigment biogenesis in the dark. Essential for the biosynthesis of the 3-hydroxyretinal chromophore of rhodopsin from zeaxanthin and for proper photoreceptor development. Also essential for larval light perception. The protein is Carotenoid isomerooxygenase (ninaB) of Drosophila melanogaster (Fruit fly).